Reading from the N-terminus, the 2472-residue chain is Spectrin alpha chain, non-erythrocytic 1 (2472 aa).

Met1 carries the N-acetylmethionine modification. Spectrin repeat units follow at residues 45–146, 150–251, 256–358, 361–465, 468–570, 574–676, 679–781, 785–888, and 891–961; these read RFQF…IKLL, KLVQ…QGKL, EVQR…ARLD, YRLQ…QYEQ, DLQL…AQLA, HLQQ…KLRE, QQQQ…QKLA, RLQQ…DLED, and QAQQ…QQVA. Ser587 carries the phosphoserine modification. Lys637 carries the N6-acetyllysine modification. Lys803 is modified (N6-acetyllysine). Residues Ser924, Ser982, Ser999, Ser1029, Ser1031, and Ser1041 each carry the phosphoserine modification. In terms of domain architecture, SH3 spans 967-1026; that stretch reads TGKELVLALYDYQEKSPREVTMKKGDILTLLNSTNKDWWKVEVNDRQGFVPAAYVKKLDP. A Spectrin 10 repeat occupies 1096 to 1166; sequence LFREANELQQ…LESEGLMAEE (71 aa). Tyr1176 is modified (phosphotyrosine). Residues Ser1190, Ser1207, Ser1217, Ser1291, Ser1306, Ser1323, and Ser1338 each carry the phosphoserine modification. Residues 1233-1336 form a Spectrin 11 repeat; sequence HEVQRFHRDA…RADQRKAKLG (104 aa). 2 Spectrin repeats span residues 1339-1441 and 1446-1549; these read HDLQ…RMML and ELQL…KLGE. Lys1519 is modified (N6-acetyllysine). A phosphoserine mark is found at Ser1550, Ser1557, Ser1578, Ser1615, and Ser1647. 7 Spectrin repeats span residues 1552 to 1656, 1659 to 1762, 1764 to 1868, 1871 to 1974, 1978 to 2081, 2092 to 2194, and 2206 to 2310; these read TLQQ…KLKE, KQQN…KLSE, HRLH…RLEE, EYQQ…KLDE, FLQF…KLLE, LFLT…LELQ, and LRQE…NLEQ. At Thr2020 the chain carries Phosphothreonine. Lys2052 bears the N6-acetyllysine mark. Thr2066 carries the post-translational modification Phosphothreonine. EF-hand domains lie at 2323-2358, 2366-2401, and 2404-2439; these read EALK…LGYD, EPDP…RETE, and KSSE…EQAD. Asp2336, Asp2338, Ser2340, Arg2342, Glu2347, Asp2379, Asn2381, Asp2383, His2385, and Glu2390 together coordinate Ca(2+). Lys2421 bears the N6-acetyllysine mark.

It belongs to the spectrin family. Like erythrocyte spectrin, the spectrin-like proteins are capable of forming dimers which can further associate to tetramers. Interacts (via C-terminal spectrin repeats) with TRPC4. Interacts with CALM and EMD. Interacts with isoform 1 of ACP1. Identified in a complex with ACTN4, CASK, IQGAP1, MAGI2, NPHS1 and SPTBN1. Interacts with SHANK3 (via ANK repeats). Interacts with CLN3; this interaction regulates the fodrin localization at the plasma membrane. In terms of processing, phosphorylation of Tyr-1176 decreases sensitivity to cleavage by calpain in vitro.

The protein resides in the cytoplasm. The protein localises to the cytoskeleton. It is found in the cell cortex. Its function is as follows. Fodrin, which seems to be involved in secretion, interacts with calmodulin in a calcium-dependent manner and is thus candidate for the calcium-dependent movement of the cytoskeleton at the membrane. The sequence is that of Spectrin alpha chain, non-erythrocytic 1 (Sptan1) from Mus musculus (Mouse).